The sequence spans 374 residues: Zinc finger CCCH domain-containing protein 15 homolog (374 aa).

The tract at residues Met1–Val20 is disordered. Over residues Lys10–Val20 the composition is skewed to basic and acidic residues. C3H1-type zinc fingers lie at residues Asp90 to Ala117 and Val166 to Pro199.

The protein belongs to the ZC3H15/TMA46 family.

In Caenorhabditis elegans, this protein is Zinc finger CCCH domain-containing protein 15 homolog.